The following is a 440-amino-acid chain: Transposon Ty1-ER2 Gag polyprotein (440 aa).

Polar residues-rich tracts occupy residues 1–10 (MESQQLSNYP), 48–60 (TKANSQQTTTPAS), and 127–152 (QSQFPQYPSSVGTPLSTPSPESGNTF). Disordered regions lie at residues 1 to 93 (MESQ…MMTQ), 126 to 173 (PQSQ…RPPP), and 352 to 440 (GSRN…PETY). Residues 153–165 (TDSSSADSDMTST) are compositionally biased toward low complexity. Residues 299–401 (NNGIHINNKV…NSKSKTARAH (103 aa)) are RNA-binding. Residues 402-418 (NVSTSNNSPSTDNDSIS) show a composition bias toward low complexity. S416 carries the post-translational modification Phosphoserine. Over residues 419–428 (KSTTEPIQLN) the composition is skewed to polar residues. The segment covering 429–440 (NKHDLHLRPETY) has biased composition (basic and acidic residues).

In terms of assembly, homotrimer.

It is found in the cytoplasm. Functionally, capsid protein (CA) is the structural component of the virus-like particle (VLP), forming the shell that encapsulates the retrotransposons dimeric RNA genome. The particles are assembled from trimer-clustered units and there are holes in the capsid shells that allow for the diffusion of macromolecules. CA also has nucleocapsid-like chaperone activity, promoting primer tRNA(i)-Met annealing to the multipartite primer-binding site (PBS), dimerization of Ty1 RNA and initiation of reverse transcription. The polypeptide is Transposon Ty1-ER2 Gag polyprotein (TY1A-ER2) (Saccharomyces cerevisiae (strain ATCC 204508 / S288c) (Baker's yeast)).